The primary structure comprises 420 residues: Glucose-1-phosphate adenylyltransferase (420 aa).

Alpha-D-glucose 1-phosphate-binding positions include tyrosine 107, glycine 172, 187–188 (EK), and serine 205.

The protein belongs to the bacterial/plant glucose-1-phosphate adenylyltransferase family. Homotetramer.

The enzyme catalyses alpha-D-glucose 1-phosphate + ATP + H(+) = ADP-alpha-D-glucose + diphosphate. Its pathway is glycan biosynthesis; glycogen biosynthesis. Involved in the biosynthesis of ADP-glucose, a building block required for the elongation reactions to produce glycogen. Catalyzes the reaction between ATP and alpha-D-glucose 1-phosphate (G1P) to produce pyrophosphate and ADP-Glc. The chain is Glucose-1-phosphate adenylyltransferase from Rhodopseudomonas palustris (strain HaA2).